The chain runs to 300 residues: Ribosomal protein L11 methyltransferase (300 aa).

S-adenosyl-L-methionine is bound by residues threonine 152, glycine 173, aspartate 195, and asparagine 234.

It belongs to the methyltransferase superfamily. PrmA family.

The protein resides in the cytoplasm. The catalysed reaction is L-lysyl-[protein] + 3 S-adenosyl-L-methionine = N(6),N(6),N(6)-trimethyl-L-lysyl-[protein] + 3 S-adenosyl-L-homocysteine + 3 H(+). Functionally, methylates ribosomal protein L11. This chain is Ribosomal protein L11 methyltransferase, found in Paraburkholderia phymatum (strain DSM 17167 / CIP 108236 / LMG 21445 / STM815) (Burkholderia phymatum).